The sequence spans 376 residues: Erythronate-4-phosphate dehydrogenase (376 aa).

Positions 45 and 67 each coordinate substrate. Residue Asp-147 coordinates NAD(+). Arg-209 is an active-site residue. Residue Asp-233 coordinates NAD(+). Glu-238 is an active-site residue. Catalysis depends on His-255, which acts as the Proton donor. Gly-258 contributes to the NAD(+) binding site. Tyr-259 is a substrate binding site.

It belongs to the D-isomer specific 2-hydroxyacid dehydrogenase family. PdxB subfamily. As to quaternary structure, homodimer.

The protein resides in the cytoplasm. It carries out the reaction 4-phospho-D-erythronate + NAD(+) = (R)-3-hydroxy-2-oxo-4-phosphooxybutanoate + NADH + H(+). Its pathway is cofactor biosynthesis; pyridoxine 5'-phosphate biosynthesis; pyridoxine 5'-phosphate from D-erythrose 4-phosphate: step 2/5. Functionally, catalyzes the oxidation of erythronate-4-phosphate to 3-hydroxy-2-oxo-4-phosphonooxybutanoate. The protein is Erythronate-4-phosphate dehydrogenase of Shewanella sp. (strain W3-18-1).